We begin with the raw amino-acid sequence, 46 residues long: Photosystem II reaction center protein K (46 aa).

Residues 1–9 (MTTLALVLA) constitute a propeptide that is removed on maturation. The chain crosses the membrane as a helical span at residues 18–38 (FAPIVDVLPVIPVFFILLAFV).

It belongs to the PsbK family. In terms of assembly, PSII is composed of 1 copy each of membrane proteins PsbA, PsbB, PsbC, PsbD, PsbE, PsbF, PsbH, PsbI, PsbJ, PsbK, PsbL, PsbM, PsbT, PsbX, PsbY, PsbZ, Psb30/Ycf12, at least 3 peripheral proteins of the oxygen-evolving complex and a large number of cofactors. It forms dimeric complexes. This protein is tightly associated with CP43 (psbC), one of the core proteins.

The protein resides in the plastid. It localises to the chloroplast thylakoid membrane. One of the components of the core complex of photosystem II (PSII). PSII is a light-driven water:plastoquinone oxidoreductase that uses light energy to abstract electrons from H(2)O, generating O(2) and a proton gradient subsequently used for ATP formation. It consists of a core antenna complex that captures photons, and an electron transfer chain that converts photonic excitation into a charge separation. Required for assembly and/or stability of PSII. The chain is Photosystem II reaction center protein K from Chlamydomonas reinhardtii (Chlamydomonas smithii).